A 68-amino-acid polypeptide reads, in one-letter code: Large ribosomal subunit protein eL24 (68 aa).

Zn(2+)-binding residues include C7, C10, C33, and C37. The segment at 7–37 adopts a C4-type zinc-finger fold; it reads CSYCGREFEPGTGKMFVRNDGRVLFFCSSKC.

Belongs to the eukaryotic ribosomal protein eL24 family. In terms of assembly, part of the 50S ribosomal subunit. Forms a cluster with proteins L3 and L14. Requires Zn(2+) as cofactor.

Binds to the 23S rRNA. In Thermococcus onnurineus (strain NA1), this protein is Large ribosomal subunit protein eL24.